A 258-amino-acid polypeptide reads, in one-letter code: Type II restriction enzyme HincII (258 aa).

It catalyses the reaction Endonucleolytic cleavage of DNA to give specific double-stranded fragments with terminal 5'-phosphates.. In terms of biological role, a P subtype restriction enzyme that recognizes the double-stranded sequence 5'-GTYRAC-3' and cleaves after Y-3. The sequence is that of Type II restriction enzyme HincII (hincIIR) from Haemophilus influenzae.